The following is a 357-amino-acid chain: COP9 signalosome complex subunit 5a (357 aa).

M1 carries the post-translational modification N-acetylmethionine. The 138-residue stretch at V59–G196 folds into the MPN domain. Zn(2+) contacts are provided by H142, H144, and D155. The short motif at H142–D155 is the JAMM motif element. Residues A338 to S357 form a disordered region.

Belongs to the peptidase M67A family. CSN5 subfamily. As to quaternary structure, component of the CSN complex, probably composed of CSN1, CSN2, CSN3, CSN4, CSN5 (CSN5A or CSN5B), CSN6 (CSN6A or CSN6B), CSN7 and CSN8. CSN5A or CSN5B are present within distinct CSN complexes each containing only one copy of CSN5. Interacts with itself. In the complex, it is located in the center and probably interacts directly with CSN4 and CSN6A or CSN6B. Present also in subcomplex forms which inculdes CSN3. Also exists as monomeric form. Interacts with CYT1 in vitro, but not in planta. The cofactor is a divalent metal cation. Ubiquitously expressed. Highly expressed in flowers and roots. Expressed at lower level in seedlings and siliques.

Its subcellular location is the cytoplasm. The protein resides in the nucleus. In terms of biological role, probable protease subunit of the COP9 signalosome complex (CSN), a complex involved in various cellular and developmental processes such as photomorphogenesis and auxin and jasmonate responses. The CSN complex is an essential regulator of the ubiquitin (Ubl) conjugation pathway by mediating the deneddylation of the cullin subunits of the SCF-type E3 ligase complexes, leading to decrease the Ubl ligase activity of SCF. In the complex, it probably acts as the catalytic center that mediates the cleavage of Nedd8 from cullins. It however has no metalloprotease activity by itself and requires the other subunits of the CSN complex. The CSN complex is involved in repression of photomorphogenesis in darkness by regulating the activity of COP1-containing Ubl ligase complexes. The complex is also required for degradation of PSIAA6 by regulating the activity of the Ubl ligase SCF-TIR complex. Involved in CSN's deneddylation/derubylation activity. Required for the deneddylation of all cullins. Essential for the structural integrity of the CSN holocomplex. In Arabidopsis thaliana (Mouse-ear cress), this protein is COP9 signalosome complex subunit 5a.